The chain runs to 156 residues: Protein archease-like (156 aa).

The Ca(2+) site is built by Asp-25, Asp-155, and Ile-156.

It belongs to the archease family.

Functionally, component of the tRNA-splicing ligase complex required to facilitate the enzymatic turnover of catalytic subunit RtcB. Plays an important role in a RNA repair and splicing pathway which controls axon regeneration in response to peripheral (PNS) and central nervous system (CNS) injury, by activating splicing of Xbp1 to promote axon regeneration in response to axotomy. The polypeptide is Protein archease-like (Drosophila melanogaster (Fruit fly)).